A 130-amino-acid polypeptide reads, in one-letter code: Small ribosomal subunit protein uS11c (130 aa).

Belongs to the universal ribosomal protein uS11 family. Part of the 30S ribosomal subunit.

Its subcellular location is the plastid. The protein resides in the chloroplast. This chain is Small ribosomal subunit protein uS11c, found in Spirogyra maxima (Green alga).